The primary structure comprises 30 residues: Photosystem I reaction center subunit XII (30 aa).

Residues 7–29 (VYTVLLIALLASVLAIRLGSTLY) traverse the membrane as a helical segment.

It belongs to the PsaM family.

It localises to the plastid. Its subcellular location is the chloroplast thylakoid membrane. The sequence is that of Photosystem I reaction center subunit XII from Trieres chinensis (Marine centric diatom).